Here is a 1187-residue protein sequence, read N- to C-terminus: Protein CHROMATIN REMODELING 8 (1187 aa).

Residues 1–55 (MEEDEDQFLLSSLGVTSANPEDLEQKILDEATKKPDNDEGGSVEEKSTQLEGTNL) are disordered. Polar residues predominate over residues 9-19 (LLSSLGVTSAN). Residues 23–48 (LEQKILDEATKKPDNDEGGSVEEKST) are compositionally biased toward basic and acidic residues. Residues 110 to 170 (LQHALATDRL…LKRKLKEIRK (61 aa)) are a coiled coil. Positions 162-169 (KRKLKEIR) match the Nuclear localization signal 1 motif. 2 disordered regions span residues 223-247 (GFER…DENE) and 273-343 (DAED…DGRR). Short sequence motifs (nuclear localization signal) lie at residues 290 to 297 (LRKLYKTP) and 310 to 317 (GKKSKKTR). Residues 305-328 (KKRKAGKKSKKTRPLPEKKWRKRI) are compositionally biased toward basic residues. The Helicase ATP-binding domain occupies 397-594 (WELHCQRAGG…WSLFDFVFPG (198 aa)). Residue 410 to 417 (DEMGLGKT) coordinates ATP. The interval 467–501 (SAQDSGHGKGQGKASESDYDSESSVDSDHEPKSKN) is disordered. Positions 492 to 501 (DSDHEPKSKN) are enriched in basic and acidic residues. Residues 545-548 (DEGH) carry the DEGH box motif. Residues 730–890 (KVVAEVLKVW…RRFFKARDMK (161 aa)) form the Helicase C-terminal domain. Positions 987–1016 (NANDEEEKMRLEHQASQVAQRAAEALRQSR) form a coiled coil. A compositionally biased stretch (polar residues) spans 1050-1059 (VNSRLTQTGD). A disordered region spans residues 1050–1075 (VNSRLTQTGDKPSAIKNGISAGLSSG).

Belongs to the SNF2/RAD54 helicase family. Homodimer. Binds DNA.

The protein resides in the nucleus. Its function is as follows. Essential factor involved in transcription-coupled nucleotide excision repair (TCR) which allows RNA polymerase II-blocking lesions to be rapidly removed from the transcribed strand of active genes. Upon DNA-binding, it locally modifies DNA conformation by wrapping the DNA around itself, thereby modifying the interface between stalled RNA polymerase II and DNA. It is required for transcription-coupled repair complex formation. This chain is Protein CHROMATIN REMODELING 8, found in Arabidopsis thaliana (Mouse-ear cress).